The chain runs to 331 residues: UPF0194 membrane protein YbhG (331 aa).

An N-terminal signal peptide occupies residues M1 to A19. Residues E107–A208 are a coiled coil.

It belongs to the UPF0194 family.

It is found in the periplasm. In Salmonella arizonae (strain ATCC BAA-731 / CDC346-86 / RSK2980), this protein is UPF0194 membrane protein YbhG.